The chain runs to 197 residues: 3-isopropylmalate dehydratase small subunit (197 aa).

It belongs to the LeuD family. LeuD type 1 subfamily. In terms of assembly, heterodimer of LeuC and LeuD.

It catalyses the reaction (2R,3S)-3-isopropylmalate = (2S)-2-isopropylmalate. It functions in the pathway amino-acid biosynthesis; L-leucine biosynthesis; L-leucine from 3-methyl-2-oxobutanoate: step 2/4. Functionally, catalyzes the isomerization between 2-isopropylmalate and 3-isopropylmalate, via the formation of 2-isopropylmaleate. This chain is 3-isopropylmalate dehydratase small subunit, found in Streptomyces griseus subsp. griseus (strain JCM 4626 / CBS 651.72 / NBRC 13350 / KCC S-0626 / ISP 5235).